Consider the following 235-residue polypeptide: Orotidine 5'-phosphate decarboxylase (235 aa).

Substrate contacts are provided by residues aspartate 17, lysine 39, 66 to 75 (DMKLLDIDHT), threonine 121, arginine 182, glutamine 191, and arginine 212. Lysine 68 functions as the Proton donor in the catalytic mechanism.

The protein belongs to the OMP decarboxylase family. Type 1 subfamily. As to quaternary structure, homodimer.

The catalysed reaction is orotidine 5'-phosphate + H(+) = UMP + CO2. Its pathway is pyrimidine metabolism; UMP biosynthesis via de novo pathway; UMP from orotate: step 2/2. Functionally, catalyzes the decarboxylation of orotidine 5'-monophosphate (OMP) to uridine 5'-monophosphate (UMP). This chain is Orotidine 5'-phosphate decarboxylase, found in Bartonella bacilliformis.